A 226-amino-acid polypeptide reads, in one-letter code: HTH-type transcriptional regulator Rv0324 (226 aa).

The HTH arsR-type domain occupies 7-101 (RKAALLDQVA…LVQVVADEHL (95 aa)). A DNA-binding region (H-T-H motif) is located at residues 41 to 64 (VEAIATATGMNLTTASANLQALKS). The region spanning 129–218 (EAGEVTLVDV…WRLAGLPVDE (90 aa)) is the Rhodanese domain. The active-site Cysteine persulfide intermediate is the Cys177.

Part of a regulatory network that coordinates tolerance to the antitubercular drug bedaquiline. The polypeptide is HTH-type transcriptional regulator Rv0324 (Mycobacterium tuberculosis (strain ATCC 25618 / H37Rv)).